A 328-amino-acid chain; its full sequence is Neuropeptides B/W receptor type 1 (328 aa).

Over 1–37 the chain is Extracellular; it reads MDNASFSEPWPANASGPDPALSCSNASTLAPLPAPLA. Residues asparagine 3, asparagine 13, and asparagine 25 are each glycosylated (N-linked (GlcNAc...) asparagine). The chain crosses the membrane as a helical span at residues 38–61; that stretch reads VAVPVVYAVICAVGLAGNSAVLYV. Over 62-72 the chain is Cytoplasmic; the sequence is LLRAPRMKTVT. The chain crosses the membrane as a helical span at residues 73 to 97; sequence NLFILNLAIADELFTLVLPINIADF. Over 98–112 the chain is Extracellular; sequence LLRQWPFGELMCKLI. Cysteines 109 and 188 form a disulfide. Residues 113-132 form a helical membrane-spanning segment; that stretch reads VAIDQYNTFSSLYFLTVMSA. Topologically, residues 133–157 are cytoplasmic; sequence DRYLVVLATAESRRVAGRTYSAARA. A helical transmembrane segment spans residues 158–177; the sequence is VSLAVWGIVTLVVLPFAVFA. The Extracellular portion of the chain corresponds to 178 to 202; sequence RLDDEQGRRQCVLVFPQPEAFWWRA. Residues 203-224 traverse the membrane as a helical segment; sequence SRLYTLVLGFAIPVSTICVLYT. Over 225–248 the chain is Cytoplasmic; the sequence is TLLCRLHAMRLDSHAKALERAKKR. The helical transmembrane segment at 249–273 threads the bilayer; sequence VTFLVVAILAVCLLCWTPYHLSTVV. The Extracellular segment spans residues 274 to 283; that stretch reads ALTTDLPQTP. The chain crosses the membrane as a helical span at residues 284–298; that stretch reads LVIAISYFITSLSYA. Residues 299–328 are Cytoplasmic-facing; it reads NSCLNPFLYAFLDASFRRNLRQLITCRAAA.

This sequence belongs to the G-protein coupled receptor 1 family. Found in cerebellum and frontal cortex. Detected at high levels in hippocampus, amygdala and trachea; at moderate levels in fetal brain, pituitary gland and prostate. Not in caudate, accumbens, kidney or liver. Also detected at high levels in lung carcinoma.

It localises to the cell membrane. Interacts specifically with a number of opioid ligands. Receptor for neuropeptides B and W, which may be involved in neuroendocrine system regulation, food intake and the organization of other signals. Has a higher affinity for neuropeptide B. The sequence is that of Neuropeptides B/W receptor type 1 (NPBWR1) from Homo sapiens (Human).